The sequence spans 855 residues: Envelope glycoprotein gp150 (855 aa).

Residues 1–784 (MAEGFAVNRQ…WLGNIPRYLK (784 aa)) lie on the Extracellular side of the membrane. N-linked (GlcNAc...) asparagine; by host glycans are attached at residues Asn-220, Asn-258, Asn-269, Asn-274, Asn-298, Asn-330, Asn-336, Asn-342, Asn-418, Asn-422, Asn-448, Asn-469, Asn-481, Asn-499, Asn-518, Asn-531, and Asn-548. Residues 615-635 (VMLALATVLSMAGAGTGATAI) are fusion peptide. Residues 642-692 (HQVLATHQETIEKITEALKVNNLRLVTLEHQVLVIGLKVEAIEKFLYTAFA) are a coiled coil. The immunosuppression stretch occupies residues 661-679 (VNNLRLVTLEHQVLVIGLK). Residues Asn-716, Asn-720, and Asn-736 are each glycosylated (N-linked (GlcNAc...) asparagine; by host). Residues 735–771 (YNQTKDLQQKFYEIIMDMEQNNVQGRKGLQQLQEWED) are a coiled coil. The helical transmembrane segment at 785 to 805 (GLLGGILGIGLGVLLLILCLP) threads the bilayer. Residues 806–855 (TLVDCIRNCISKVLGYTVIAMPEVEEEEIQPPMELRRNGRQCDMSEKEEE) are Cytoplasmic-facing. The interval 835-855 (QPPMELRRNGRQCDMSEKEEE) is disordered.

As to quaternary structure, the mature envelope protein (Env) consists of a trimer of SU-TM heterodimers attached by noncovalent interactions or by a labile interchain disulfide bond. Specific enzymatic cleavages in vivo yield mature proteins. Envelope glycoproteins are synthesized as an inactive precursor that is N-glycosylated and processed likely by host cell furin or by a furin-like protease in the Golgi to yield the mature SU and TM proteins. The cleavage site between SU and TM requires the minimal sequence [KR]-X-[KR]-R.

The protein resides in the virion membrane. It is found in the host cell membrane. Functionally, the surface protein (SU) attaches the virus to the host cell by binding to its receptor. This interaction triggers the refolding of the transmembrane protein (TM) and is thought to activate its fusogenic potential by unmasking its fusion peptide. Fusion occurs at the host cell plasma membrane. The transmembrane protein (TM) acts as a class I viral fusion protein. Under the current model, the protein has at least 3 conformational states: pre-fusion native state, pre-hairpin intermediate state, and post-fusion hairpin state. During viral and target cell membrane fusion, the coiled coil regions (heptad repeats) assume a trimer-of-hairpins structure, positioning the fusion peptide in close proximity to the C-terminal region of the ectodomain. The formation of this structure appears to drive apposition and subsequent fusion of viral and target cell membranes. Membranes fusion leads to delivery of the nucleocapsid into the cytoplasm. This chain is Envelope glycoprotein gp150 (env), found in Feline immunodeficiency virus (strain UK2) (FIV).